The chain runs to 435 residues: Adenylosuccinate synthetase (435 aa).

Residues 11 to 17 and 39 to 41 each bind GTP; these read GDEGKGK and GHT. Catalysis depends on D12, which acts as the Proton acceptor. The Mg(2+) site is built by D12 and G39. IMP is bound by residues 12–15, 37–40, T128, R142, Q223, T238, and R302; these read DEGK and NAGH. The Proton donor role is filled by H40. Substrate is bound at residue 298–304; sequence SVTGRPR. GTP-binding positions include R304, 330 to 332, and 412 to 414; these read KLD and STG.

Belongs to the adenylosuccinate synthetase family. Homodimer. Requires Mg(2+) as cofactor.

The protein localises to the cytoplasm. The enzyme catalyses IMP + L-aspartate + GTP = N(6)-(1,2-dicarboxyethyl)-AMP + GDP + phosphate + 2 H(+). It participates in purine metabolism; AMP biosynthesis via de novo pathway; AMP from IMP: step 1/2. Its function is as follows. Plays an important role in the de novo pathway of purine nucleotide biosynthesis. Catalyzes the first committed step in the biosynthesis of AMP from IMP. The chain is Adenylosuccinate synthetase from Coxiella burnetii (strain CbuK_Q154) (Coxiella burnetii (strain Q154)).